We begin with the raw amino-acid sequence, 206 residues long: Small ribosomal subunit protein uS4 (206 aa).

Residues 96–156 (CRLDNVVYRM…EKSLGQLRIV (61 aa)) enclose the S4 RNA-binding domain.

Belongs to the universal ribosomal protein uS4 family. Part of the 30S ribosomal subunit. Contacts protein S5. The interaction surface between S4 and S5 is involved in control of translational fidelity.

In terms of biological role, one of the primary rRNA binding proteins, it binds directly to 16S rRNA where it nucleates assembly of the body of the 30S subunit. Functionally, with S5 and S12 plays an important role in translational accuracy. The sequence is that of Small ribosomal subunit protein uS4 from Pseudomonas putida (strain ATCC 47054 / DSM 6125 / CFBP 8728 / NCIMB 11950 / KT2440).